The sequence spans 149 residues: MKTIDVKILDPRMQEQMPAYATSGSAGLDLRACIEAPITIKPGETHLIPTGLAIHIGNPAYAAVILPRSGMGHKHGIVLGNLVGLIDSDYQGQLMVSTWNRGQAEFVLNPMERLAQLVIVPVLQVGFNIVDDFDSSERGAGGFGSTGKH.

Substrate-binding positions include 68-70 (RSG), asparagine 81, 85-87 (LID), and methionine 95.

Belongs to the dUTPase family. Mg(2+) is required as a cofactor.

It catalyses the reaction dUTP + H2O = dUMP + diphosphate + H(+). Its pathway is pyrimidine metabolism; dUMP biosynthesis; dUMP from dCTP (dUTP route): step 2/2. Functionally, this enzyme is involved in nucleotide metabolism: it produces dUMP, the immediate precursor of thymidine nucleotides and it decreases the intracellular concentration of dUTP so that uracil cannot be incorporated into DNA. The chain is Deoxyuridine 5'-triphosphate nucleotidohydrolase from Herminiimonas arsenicoxydans.